We begin with the raw amino-acid sequence, 543 residues long: Carboxypeptidase Y homolog A (543 aa).

Residues Met1–Ala17 form the signal peptide. Positions Gln18–Lys124 are excised as a propeptide. Cystine bridges form between Cys179–Cys419, Cys313–Cys327, Cys337–Cys360, Cys344–Cys353, and Cys382–Cys389. Asn210 is a glycosylation site (N-linked (GlcNAc...) asparagine). Ser266 is a catalytic residue. The active site involves Asp458. Asn509 is a glycosylation site (N-linked (GlcNAc...) asparagine). The active site involves His520.

Belongs to the peptidase S10 family.

It localises to the vacuole. The enzyme catalyses Release of a C-terminal amino acid with broad specificity.. Its function is as follows. Vacuolar carboxypeptidase involved in degradation of small peptides. Digests preferentially peptides containing an aliphatic or hydrophobic residue in P1' position, as well as methionine, leucine or phenylalanine in P1 position of ester substrate. This chain is Carboxypeptidase Y homolog A (cpyA), found in Trichophyton verrucosum (strain HKI 0517).